The chain runs to 422 residues: 5-hydroxytryptamine receptor 1A (422 aa).

Positions methionine 1–glycine 23 are disordered. Topologically, residues methionine 1–isoleucine 38 are extracellular. N-linked (GlcNAc...) asparagine glycans are attached at residues asparagine 10, asparagine 11, and asparagine 24. Residues threonine 39 to alanine 59 traverse the membrane as a helical segment. Over alanine 60–tyrosine 73 the chain is Cytoplasmic. Residues leucine 74–valine 98 traverse the membrane as a helical segment. Residues leucine 99–valine 107 are Extracellular-facing. The chain crosses the membrane as a helical span at residues threonine 108–leucine 132. Residues cysteine 109 and cysteine 187 are joined by a disulfide bond. Residues aspartate 116 and cysteine 120 each coordinate serotonin. Positions aspartate 133–tyrosine 135 match the DRY motif; important for ligand-induced conformation changes motif. At aspartate 133–arginine 152 the chain is on the cytoplasmic side. The chain crosses the membrane as a helical span at residues alanine 153 to glycine 174. Over tryptophan 175–histidine 193 the chain is Extracellular. A helical transmembrane segment spans residues glycine 194–glycine 216. Residues arginine 217–threonine 346 are Cytoplasmic-facing. Positions lysine 235–asparagine 262 are disordered. 4 residues coordinate 1D-myo-inositol 4-phosphate: threonine 314, lysine 345, threonine 346, and glycine 352. Residues leucine 347–phenylalanine 370 traverse the membrane as a helical segment. At cysteine 371–proline 378 the chain is on the extracellular side. A helical membrane pass occupies residues threonine 379–phenylalanine 403. Residues asparagine 396–tyrosine 400 carry the NPxxY motif; important for ligand-induced conformation changes and signaling motif. The 1D-myo-inositol 4-phosphate site is built by phenylalanine 403, asparagine 404, and lysine 405. The Cytoplasmic portion of the chain corresponds to asparagine 404–glutamine 422.

It belongs to the G-protein coupled receptor 1 family. 5-hydroxytryptamine receptor subfamily. HTR1A sub-subfamily. As to quaternary structure, heterodimer; heterodimerizes with GPER1. Interacts with YIF1B. Interacts with GPR39 and GALR1.

It is found in the cell membrane. The protein resides in the cell projection. The protein localises to the dendrite. G-protein coupled receptor activity is regulated by lipids: phosphatidylinositol 4-phosphate increases HTR1A-mediated activity. In terms of biological role, G-protein coupled receptor for 5-hydroxytryptamine (serotonin). Also functions as a receptor for various drugs and psychoactive substances. Ligand binding causes a conformation change that triggers signaling via guanine nucleotide-binding proteins (G proteins) and modulates the activity of downstream effectors, such as adenylate cyclase. HTR1A is coupled to G(i)/G(o) G alpha proteins and mediates inhibitory neurotransmission: signaling inhibits adenylate cyclase activity and activates a phosphatidylinositol-calcium second messenger system that regulates the release of Ca(2+) ions from intracellular stores. Beta-arrestin family members regulate signaling by mediating both receptor desensitization and resensitization processes. The chain is 5-hydroxytryptamine receptor 1A (HTR1A) from Gorilla gorilla gorilla (Western lowland gorilla).